Reading from the N-terminus, the 295-residue chain is Phosphatidylserine decarboxylase proenzyme (295 aa).

Active-site charge relay system; for autoendoproteolytic cleavage activity residues include aspartate 90, histidine 147, and serine 254. Serine 254 serves as the catalytic Schiff-base intermediate with substrate; via pyruvic acid; for decarboxylase activity. Serine 254 carries the pyruvic acid (Ser); by autocatalysis modification.

It belongs to the phosphatidylserine decarboxylase family. PSD-B subfamily. Prokaryotic type I sub-subfamily. Heterodimer of a large membrane-associated beta subunit and a small pyruvoyl-containing alpha subunit. Pyruvate is required as a cofactor. In terms of processing, is synthesized initially as an inactive proenzyme. Formation of the active enzyme involves a self-maturation process in which the active site pyruvoyl group is generated from an internal serine residue via an autocatalytic post-translational modification. Two non-identical subunits are generated from the proenzyme in this reaction, and the pyruvate is formed at the N-terminus of the alpha chain, which is derived from the carboxyl end of the proenzyme. The autoendoproteolytic cleavage occurs by a canonical serine protease mechanism, in which the side chain hydroxyl group of the serine supplies its oxygen atom to form the C-terminus of the beta chain, while the remainder of the serine residue undergoes an oxidative deamination to produce ammonia and the pyruvoyl prosthetic group on the alpha chain. During this reaction, the Ser that is part of the protease active site of the proenzyme becomes the pyruvoyl prosthetic group, which constitutes an essential element of the active site of the mature decarboxylase.

It localises to the cell membrane. It catalyses the reaction a 1,2-diacyl-sn-glycero-3-phospho-L-serine + H(+) = a 1,2-diacyl-sn-glycero-3-phosphoethanolamine + CO2. Its pathway is phospholipid metabolism; phosphatidylethanolamine biosynthesis; phosphatidylethanolamine from CDP-diacylglycerol: step 2/2. Functionally, catalyzes the formation of phosphatidylethanolamine (PtdEtn) from phosphatidylserine (PtdSer). This Sodalis glossinidius (strain morsitans) protein is Phosphatidylserine decarboxylase proenzyme.